The following is a 345-amino-acid chain: NADH-ubiquinone oxidoreductase chain 2 (345 aa).

The next 10 membrane-spanning stretches (helical) occupy residues 1–21 (MNPL…ILTT), 26–46 (WVSA…IISM), 60–80 (FLIQ…NAHL), 96–115 (IALT…HFWL), 122–144 (VPIL…LLIM), 148–170 (LIPT…LGGL), 201–223 (TLLN…HLTM), 242–262 (SLFL…GFIP), 274–294 (NLTP…MFYL), and 323–343 (TSTL…TPTL).

It belongs to the complex I subunit 2 family.

The protein localises to the mitochondrion inner membrane. It catalyses the reaction a ubiquinone + NADH + 5 H(+)(in) = a ubiquinol + NAD(+) + 4 H(+)(out). Core subunit of the mitochondrial membrane respiratory chain NADH dehydrogenase (Complex I) that is believed to belong to the minimal assembly required for catalysis. Complex I functions in the transfer of electrons from NADH to the respiratory chain. The immediate electron acceptor for the enzyme is believed to be ubiquinone. In Varanus nebulosus (Clouded monitor), this protein is NADH-ubiquinone oxidoreductase chain 2 (MT-ND2).